A 1960-amino-acid polypeptide reads, in one-letter code: Myosin-9 (1960 aa).

Ala-2 carries the N-acetylalanine modification. The segment at 2–838 (AQQAADKYLY…RLFTKVKPLL (837 aa)) is mediates interaction with LIMCH1. The residue at position 8 (Lys-8) is an N6-acetyllysine. Phosphotyrosine is present on Tyr-11. Positions 27-77 (AAKKLVWVPSDKSGFEPASLKEEVGEEAIVELVENGKKVKVNKDDIQKMNP) constitute a Myosin N-terminal SH3-like domain. The Myosin motor domain occupies 81–776 (SKVEDMAELT…VLAHLEEERD (696 aa)). Residue Lys-102 is modified to N6-acetyllysine. 174–181 (GESGAGKT) is a binding site for ATP. Residues Lys-299, Lys-435, and Lys-613 each carry the N6-acetyllysine modification. Ser-628 bears the Phosphoserine mark. The interval 654–676 (LAKLMATLRNTNPNFVRCIIPNH) is actin-binding. Tyr-754 bears the Phosphotyrosine mark. An IQ domain is found at 779–808 (ITDVIIGFQACCRGYLARKAFAKRQQQLTA). Residues 837–1926 (LLQVSRQEEE…LKNKLRRGDL (1090 aa)) adopt a coiled-coil conformation. N6-succinyllysine is present on Lys-850. Residues Lys-860, Lys-975, and Lys-1024 each carry the N6-acetyllysine modification. Residues 1035–1055 (RLRREEKQRQELEKTRRKLEG) are compositionally biased toward basic and acidic residues. The segment at 1035 to 1057 (RLRREEKQRQELEKTRRKLEGDS) is disordered. Ser-1114 bears the Phosphoserine mark. Positions 1118-1137 (EDLESERASRNKAEKQKRDL) are disordered. The span at 1122–1137 (SERASRNKAEKQKRDL) shows a compositional bias: basic and acidic residues. Lys-1234, Lys-1249, Lys-1357, Lys-1392, Lys-1404, Lys-1410, Lys-1459, and Lys-1638 each carry N6-acetyllysine. Lys-1669 carries the post-translational modification N6-succinyllysine. Ser-1714 carries the post-translational modification Phosphoserine. N6-acetyllysine occurs at positions 1793, 1802, and 1845. The segment at 1877–1960 (RQLEEAEEEA…ADGAEAKPAE (84 aa)) is disordered. Omega-N-methylarginine is present on Arg-1923. Ser-1943 is modified (phosphoserine). Residues 1948-1960 (DGKADGAEAKPAE) show a composition bias toward basic and acidic residues.

Belongs to the TRAFAC class myosin-kinesin ATPase superfamily. Myosin family. In terms of assembly, myosin is a hexameric protein that consists of 2 heavy chain subunits (MHC), 2 alkali light chain subunits (MLC) and 2 regulatory light chain subunits (MLC-2). Interacts with RASIP1. Interacts with DDR1. Interacts with PDLIM2. Interacts with SVIL. Interacts with HTRA3. Interacts with Myo7a. Interacts with CFAP95. Interacts with LIMCH1; independently of the integration of MYH9 into the myosin complex. Interacts with RAB3A. Interacts with ZBED4. Interacts with S100A4; this interaction increases cell motility. As to quaternary structure, (Microbial infection) Interacts with herpes simplex virus 1/HHV-1 envelope glycoprotein B. In terms of processing, ISGylated. Post-translationally, ubiquitination. In terms of tissue distribution, in the kidney, expressed in the glomeruli. Also expressed in leukocytes.

It is found in the cytoplasm. Its subcellular location is the cytoskeleton. The protein resides in the cell cortex. It localises to the cytoplasmic vesicle. The protein localises to the secretory vesicle. It is found in the cortical granule. Its subcellular location is the cell membrane. In terms of biological role, cellular myosin that appears to play a role in cytokinesis, cell shape, and specialized functions such as secretion and capping. Required for cortical actin clearance prior to oocyte exocytosis. Promotes cell motility in conjunction with S100A4. During cell spreading, plays an important role in cytoskeleton reorganization, focal contact formation (in the margins but not the central part of spreading cells), and lamellipodial retraction; this function is mechanically antagonized by MYH10. Its function is as follows. (Microbial infection) Acts as a receptor for herpes simplex virus 1/HHV-1 envelope glycoprotein B. The chain is Myosin-9 (MYH9) from Homo sapiens (Human).